A 93-amino-acid chain; its full sequence is Co-chaperonin GroES (93 aa).

The protein belongs to the GroES chaperonin family. In terms of assembly, heptamer of 7 subunits arranged in a ring. Interacts with the chaperonin GroEL.

The protein resides in the cytoplasm. Together with the chaperonin GroEL, plays an essential role in assisting protein folding. The GroEL-GroES system forms a nano-cage that allows encapsulation of the non-native substrate proteins and provides a physical environment optimized to promote and accelerate protein folding. GroES binds to the apical surface of the GroEL ring, thereby capping the opening of the GroEL channel. This Lacticaseibacillus paracasei (strain ATCC 334 / BCRC 17002 / CCUG 31169 / CIP 107868 / KCTC 3260 / NRRL B-441) (Lactobacillus paracasei) protein is Co-chaperonin GroES.